The following is a 559-amino-acid chain: NAD-dependent malic enzyme 2 (559 aa).

Y98 serves as the catalytic Proton donor. Residue R151 coordinates NAD(+). Residue K169 is the Proton acceptor of the active site. A divalent metal cation is bound by residues E240, D241, and D264. NAD(+) contacts are provided by D264 and N413.

It belongs to the malic enzymes family. In terms of assembly, homotetramer. Requires Mg(2+) as cofactor. The cofactor is Mn(2+).

It catalyses the reaction (S)-malate + NAD(+) = pyruvate + CO2 + NADH. It carries out the reaction oxaloacetate + H(+) = pyruvate + CO2. This Vibrio vulnificus (strain YJ016) protein is NAD-dependent malic enzyme 2.